Consider the following 262-residue polypeptide: 4-hydroxy-2-oxo-heptane-1,7-dioate aldolase (262 aa).

His-45 serves as the catalytic Proton acceptor. Gln-147 contacts substrate. Position 149 (Glu-149) interacts with a divalent metal cation. Residues Ala-174 and Asp-175 each coordinate substrate. Position 175 (Asp-175) interacts with a divalent metal cation.

Belongs to the HpcH/HpaI aldolase family. Homohexamer; trimer of dimers. It depends on a divalent metal cation as a cofactor.

It carries out the reaction 4-hydroxy-2-oxoheptanedioate = succinate semialdehyde + pyruvate. It participates in aromatic compound metabolism; 4-hydroxyphenylacetate degradation; pyruvate and succinate semialdehyde from 4-hydroxyphenylacetate: step 7/7. Its function is as follows. Catalyzes the reversible retro-aldol cleavage of 4-hydroxy-2-ketoheptane-1,7-dioate (HKHD) to pyruvate and succinic semialdehyde. This Shigella boydii serotype 18 (strain CDC 3083-94 / BS512) protein is 4-hydroxy-2-oxo-heptane-1,7-dioate aldolase.